A 144-amino-acid chain; its full sequence is Small polypeptide DEVIL 15 (144 aa).

The N-linked (GlcNAc...) asparagine glycan is linked to asparagine 8. Residues 22–63 are disordered; that stretch reads SSSSKPFFTRSFSTKTSSSPSSKSHFTRSFSTKPSSSSSSSD. A helical membrane pass occupies residues 104 to 120; it reads ILSKKGASVTGKCFKVA. The segment at 111–142 is required for DVL/RTFL small polypeptide activity; that stretch reads SVTGKCFKVAKEHKSRFYIIKRCVLMLVCWHK.

Belongs to the DVL/RTFL small polypeptides family.

The protein resides in the cell membrane. Its function is as follows. Small polypeptide acting as a regulatory molecule which coordinates cellular responses required for differentiation, growth and development, probably by restricting polar cell proliferation in lateral organs and coordinating socket cell recruitment and differentiation at trichome sites. This chain is Small polypeptide DEVIL 15, found in Arabidopsis thaliana (Mouse-ear cress).